The primary structure comprises 449 residues: Heterogeneous nuclear ribonucleoprotein H (449 aa).

Met-1 carries the N-acetylmethionine; in Heterogeneous nuclear ribonucleoprotein H; alternate modification. Residue Met-2 is modified to N-acetylmethionine; in Heterogeneous nuclear ribonucleoprotein H, N-terminally processed. The region spanning 11–90 is the RRM 1 domain; sequence FVVKVRGLPW…RYVEVFKSNN (80 aa). Position 23 is a phosphoserine (Ser-23). A Glycyl lysine isopeptide (Lys-Gly) (interchain with G-Cter in SUMO2) cross-link involves residue Lys-35. 2 positions are modified to phosphoserine: Ser-54 and Ser-63. Residues Lys-87 and Lys-98 each participate in a glycyl lysine isopeptide (Lys-Gly) (interchain with G-Cter in SUMO2) cross-link. Residues 111–188 form the RRM 2 domain; sequence GFVRLRGLPF…RYIEIFKSSR (78 aa). Arg-233 is modified (dimethylated arginine; alternate). The residue at position 233 (Arg-233) is an Omega-N-methylarginine; alternate. One copy of the 1-1 repeat lies at 234–249; that stretch reads GAYGGGYGGYDDYNGY. The 2 X 16 AA Gly-rich approximate repeats stretch occupies residues 234-433; it reads GAYGGGYGGY…YGGQSSMSGY (200 aa). A Phosphotyrosine modification is found at Tyr-246. In terms of domain architecture, RRM 3 spans 289 to 364; sequence HCVHMRGLPY…RYVELFLNST (76 aa). Ser-310 bears the Phosphoserine mark. Tandem repeats lie at residues 354–372, 374–392, and 418–433. The interval 354–392 is 2 X 19 AA perfect repeats; it reads HRYVELFLNSTAGASGGAYEHRYVELFLNSTAGASGGAY.

In terms of assembly, part of a ternary complex containing FUBP2, PTBP1, PTBP2 and HNRNPH1. Identified in the spliceosome C complex. Interacts with IGF2BP1. Interacts with CUGBP1; the interaction is RNA-dependent. Interacts with MBNL1; the interaction in RNA-independent. In terms of tissue distribution, expressed ubiquitously.

It localises to the nucleus. The protein resides in the nucleoplasm. Its function is as follows. This protein is a component of the heterogeneous nuclear ribonucleoprotein (hnRNP) complexes which provide the substrate for the processing events that pre-mRNAs undergo before becoming functional, translatable mRNAs in the cytoplasm. Mediates pre-mRNA alternative splicing regulation. Inhibits, together with CUGBP1, insulin receptor (IR) pre-mRNA exon 11 inclusion in myoblast. Binds to the IR RNA. Binds poly(RG). The protein is Heterogeneous nuclear ribonucleoprotein H (HNRNPH1) of Homo sapiens (Human).